The sequence spans 190 residues: Histone H5 (190 aa).

A disordered region spans residues 1 to 29 (MTESLVLSPAPAKPKRVKASRRSASHPTY). The segment covering 13–24 (KPKRVKASRRSA) has biased composition (basic residues). Ser23, Ser30, Ser146, and Ser167 each carry phosphoserine. The 74-residue stretch at 25–98 (SHPTYSEMIA…GASGSFRLAK (74 aa)) folds into the H15 domain. Positions 87-190 (GVGASGSFRL…SGARKSPKKK (104 aa)) are disordered. Over residues 104–190 (RSPGKKKKAV…SGARKSPKKK (87 aa)) the composition is skewed to basic residues.

Belongs to the histone H1/H5 family. In terms of tissue distribution, erythroid cells.

The protein resides in the nucleus. Its subcellular location is the chromosome. Histone H5 performs the same function as H1, being necessary for the condensation of nucleosome chains into higher order structures, and replaces histone H1 in certain cells. The polypeptide is Histone H5 (Gallus gallus (Chicken)).